We begin with the raw amino-acid sequence, 254 residues long: tRNA (guanine-N(1)-)-methyltransferase (254 aa).

Residues Gly-113 and Leu-133 to Leu-138 each bind S-adenosyl-L-methionine.

The protein belongs to the RNA methyltransferase TrmD family. As to quaternary structure, homodimer.

It is found in the cytoplasm. It carries out the reaction guanosine(37) in tRNA + S-adenosyl-L-methionine = N(1)-methylguanosine(37) in tRNA + S-adenosyl-L-homocysteine + H(+). Functionally, specifically methylates guanosine-37 in various tRNAs. This is tRNA (guanine-N(1)-)-methyltransferase from Herpetosiphon aurantiacus (strain ATCC 23779 / DSM 785 / 114-95).